A 419-amino-acid polypeptide reads, in one-letter code: Gamma-glutamyl phosphate reductase (419 aa).

The protein belongs to the gamma-glutamyl phosphate reductase family.

It is found in the cytoplasm. It catalyses the reaction L-glutamate 5-semialdehyde + phosphate + NADP(+) = L-glutamyl 5-phosphate + NADPH + H(+). The protein operates within amino-acid biosynthesis; L-proline biosynthesis; L-glutamate 5-semialdehyde from L-glutamate: step 2/2. In terms of biological role, catalyzes the NADPH-dependent reduction of L-glutamate 5-phosphate into L-glutamate 5-semialdehyde and phosphate. The product spontaneously undergoes cyclization to form 1-pyrroline-5-carboxylate. The sequence is that of Gamma-glutamyl phosphate reductase from Marinomonas sp. (strain MWYL1).